We begin with the raw amino-acid sequence, 117 residues long: Large ribosomal subunit protein uL22 (117 aa).

It belongs to the universal ribosomal protein uL22 family. As to quaternary structure, part of the 50S ribosomal subunit.

In terms of biological role, this protein binds specifically to 23S rRNA; its binding is stimulated by other ribosomal proteins, e.g. L4, L17, and L20. It is important during the early stages of 50S assembly. It makes multiple contacts with different domains of the 23S rRNA in the assembled 50S subunit and ribosome. The globular domain of the protein is located near the polypeptide exit tunnel on the outside of the subunit, while an extended beta-hairpin is found that lines the wall of the exit tunnel in the center of the 70S ribosome. This is Large ribosomal subunit protein uL22 from Staphylococcus aureus (strain USA300).